A 1036-amino-acid chain; its full sequence is Hexagonally packed intermediate-layer surface protein (1036 aa).

The N-terminal stretch at 1–17 is a signal peptide; sequence MKKNIALMALTGVLTLA. 3 disulfides stabilise this stretch: C74–C86, C256–C275, and C642–C754.

Post-translationally, glycosylated; contains six glycans. In terms of processing, acylated in the N-terminal region. The N-terminus is blocked.

Its subcellular location is the secreted. The protein localises to the cell wall. The protein resides in the S-layer. Its function is as follows. Shape maintenance, possible protection from noxious enzymes or exogenous and unsettling DNA, and may mediate homotypic cell-cell contacts. The chain is Hexagonally packed intermediate-layer surface protein (hpi) from Deinococcus radiodurans.